A 211-amino-acid polypeptide reads, in one-letter code: MSYDYLFKYIIIGDTGVGKSCLLLQFTDKRFQPVHDLTIGVEFGARMVTVDGRPIKLQIWDTAGQESFRSITRSYYRGAAGALLVYDITRRETFNHLASWLEDARQHANPNMSIMLIGNKCDLAHKRAVSKEEGQQFAKEHGLLFLEASARTAQNVEEAFIETAAKILQNIQDGVFDVSNESSGIKIGYGRTQGAAGGRDGTISQGGGCCG.

Residue 13–20 participates in GTP binding; that stretch reads GDTGVGKS. The Effector region motif lies at 35-43; that stretch reads HDLTIGVEF. Residues 61-65, 119-122, and 149-150 each bind GTP; these read DTAGQ, NKCD, and SA. Residues Cys-209 and Cys-210 are each lipidated (S-geranylgeranyl cysteine).

Belongs to the small GTPase superfamily. Rab family.

Its subcellular location is the cell membrane. Intracellular vesicle trafficking and protein transport. The chain is Ras-related protein RABB1b (RABB1B) from Arabidopsis thaliana (Mouse-ear cress).